The chain runs to 225 residues: PKHD-type hydroxylase YbiX (225 aa).

A Fe2OG dioxygenase domain is found at 78–177 (TLSTPLFNRY…RVASFMWIQS (100 aa)). Residues His-96, Asp-98, and His-158 each coordinate Fe cation. Arg-168 serves as a coordination point for 2-oxoglutarate.

It depends on Fe(2+) as a cofactor. Requires L-ascorbate as cofactor.

This Escherichia coli O81 (strain ED1a) protein is PKHD-type hydroxylase YbiX.